We begin with the raw amino-acid sequence, 254 residues long: Triosephosphate isomerase (254 aa).

12 to 14 (NWK) contacts substrate. The active-site Electrophile is His99. Residue Glu169 is the Proton acceptor of the active site. Residues Gly175, Ser214, and 235–236 (GG) each bind substrate.

The protein belongs to the triosephosphate isomerase family. In terms of assembly, homodimer.

It localises to the cytoplasm. The enzyme catalyses D-glyceraldehyde 3-phosphate = dihydroxyacetone phosphate. It functions in the pathway carbohydrate biosynthesis; gluconeogenesis. The protein operates within carbohydrate degradation; glycolysis; D-glyceraldehyde 3-phosphate from glycerone phosphate: step 1/1. In terms of biological role, involved in the gluconeogenesis. Catalyzes stereospecifically the conversion of dihydroxyacetone phosphate (DHAP) to D-glyceraldehyde-3-phosphate (G3P). In Bartonella bacilliformis (strain ATCC 35685 / KC583 / Herrer 020/F12,63), this protein is Triosephosphate isomerase.